The chain runs to 1014 residues: DNA translocase FtsK 2 (1014 aa).

A helical membrane pass occupies residues 1 to 21; sequence MFWIVLIVILLLALAGLFFVR. Disordered regions lie at residues 89–142, 283–318, and 487–525; these read ESEP…EDIA, RHAGQGKGQAEAKSPDVSQGQSVSDGTAVRDARRRV, and SQAVCPFENVPSERPSRRASDTEADEGAFQSEETGAVSE. A compositionally biased stretch (acidic residues) spans 121–140; it reads EEAETEEAEAAEEEAADTED. Positions 298-307 are enriched in polar residues; it reads DVSQGQSVSD. The 210-residue stretch at 662 to 871 folds into the FtsK domain; it reads GQPVVTDLGK…FQVSSKIDSR (210 aa). 682–687 lines the ATP pocket; the sequence is GSGKSV.

It belongs to the FtsK/SpoIIIE/SftA family. In terms of assembly, homohexamer. Forms a ring that surrounds DNA.

The protein localises to the cell inner membrane. Its function is as follows. Essential cell division protein that coordinates cell division and chromosome segregation. The N-terminus is involved in assembly of the cell-division machinery. The C-terminus functions as a DNA motor that moves dsDNA in an ATP-dependent manner towards the dif recombination site, which is located within the replication terminus region. Translocation stops specifically at Xer-dif sites, where FtsK interacts with the Xer recombinase, allowing activation of chromosome unlinking by recombination. FtsK orienting polar sequences (KOPS) guide the direction of DNA translocation. FtsK can remove proteins from DNA as it translocates, but translocation stops specifically at XerCD-dif site, thereby preventing removal of XerC and XerD from dif. The sequence is that of DNA translocase FtsK 2 (ftsK2) from Neisseria meningitidis serogroup A / serotype 4A (strain DSM 15465 / Z2491).